The primary structure comprises 875 residues: Lysine-specific demethylase JMJ26 (875 aa).

The tract at residues K31–T103 is disordered. The short motif at R62–E69 is the Nuclear localization signal element. The span at K79–Q93 shows a compositional bias: basic and acidic residues. Positions 193, 196, 207, 210, 216, 219, 236, 239, 322, 325, 339, and 347 each coordinate Zn(2+). The RING-type; degenerate zinc-finger motif lies at C193–R240. Residues E317–C347 form a B box-type; degenerate zinc finger. The JmjC domain occupies P614–R837. Fe cation-binding residues include H658, D660, and H805.

The protein belongs to the JARID1 histone demethylase family. The cofactor is Fe(2+). In terms of tissue distribution, expressed in inflorescences, roots, siliques, leaves and stems.

The protein resides in the nucleus. Its function is as follows. May function as histone H3 lysine demethylase and be involved in regulation of gene expression. The sequence is that of Lysine-specific demethylase JMJ26 from Arabidopsis thaliana (Mouse-ear cress).